Reading from the N-terminus, the 325-residue chain is L-lactate dehydrogenase (325 aa).

NAD(+) contacts are provided by residues Val-19, Asp-40, Lys-45, Tyr-70, and 84-85; that span reads GA. Substrate is bound by residues Gln-87 and Arg-93. Residues Thr-106, 123–125, and Ser-148 contribute to the NAD(+) site; that span reads AAN. Position 125-128 (125-128) interacts with substrate; it reads NPVD. Position 153 to 156 (153 to 156) interacts with substrate; that stretch reads DSAR. Positions 158 and 173 each coordinate beta-D-fructose 1,6-bisphosphate. Catalysis depends on His-180, which acts as the Proton acceptor. Tyr-225 bears the Phosphotyrosine mark. A substrate-binding site is contributed by Thr-234.

It belongs to the LDH/MDH superfamily. LDH family. In terms of assembly, homotetramer.

The protein localises to the cytoplasm. It catalyses the reaction (S)-lactate + NAD(+) = pyruvate + NADH + H(+). The protein operates within fermentation; pyruvate fermentation to lactate; (S)-lactate from pyruvate: step 1/1. Its activity is regulated as follows. Allosterically activated by fructose 1,6-bisphosphate (FBP). Its function is as follows. Catalyzes the conversion of lactate to pyruvate. The polypeptide is L-lactate dehydrogenase (Latilactobacillus sakei (Lactobacillus sakei)).